We begin with the raw amino-acid sequence, 445 residues long: Protein kinase C and casein kinase substrate in neurons protein 1 (445 aa).

Residues 12-282 (DETTDSFWEV…TIVSASAQED (271 aa)) form the F-BAR domain. Coiled coils occupy residues 146–167 (AKKL…KEEK) and 183–219 (TTDQ…NKCT). Positions 327-390 (LTQVTHGAEH…PFEEDSKGVR (64 aa)) are disordered. 2 stretches are compositionally biased toward polar residues: residues 338 to 358 (TPQT…QYSA) and 368 to 379 (TAAQSASETNGG). Residues 386–445 (SKGVRVRALYDYEGQEQDELTFKAGDELTKLEDEDEQGWCKGRLDSGQLGLYPANYVEPV) enclose the SH3 domain.

In terms of assembly, interacts with cobl.

The protein localises to the cytoplasm. It is found in the cytosol. It localises to the cell membrane. The protein resides in the cell projection. Its subcellular location is the synapse. The protein localises to the synaptosome. It is found in the cytoplasmic vesicle membrane. It localises to the ruffle membrane. The protein resides in the membrane. In terms of biological role, binds to membranes via its F-BAR domain and mediates membrane tubulation. Plays a role in cellular transport processes by recruiting dynamins to membranes. Plays a role in the reorganization of the actin cytoskeleton and in neuron morphogenesis via its interaction with cobl, and by recruiting cobl to the cell cortex. Plays a role in the regulation of neurite formation, neurite branching and the regulation of neurite length. Required for normal synaptic vesicle endocytosis; this process retrieves previously released neurotransmitters to accommodate multiple cycles of neurotransmission. Required for normal excitatory and inhibitory synaptic transmission. Required for normal embryonic development, including normal development of laterality, normal body size and shape, as well as normal brain and heart development. Required for normal development of stereocilia and kinocilia in sensory hair cells of neuromasts in the posterior lateral line organ, and thus also for balance keeping and normal swimming behavior. In Danio rerio (Zebrafish), this protein is Protein kinase C and casein kinase substrate in neurons protein 1 (pacsin1b).